The following is a 546-amino-acid chain: 3-(3-hydroxy-phenyl)propionate/3-hydroxycinnamic acid hydroxylase 2 (546 aa).

FAD-binding positions include 10–39 (SVAI…VVER) and 278–288 (FVAGRIALVGD).

The protein belongs to the PheA/TfdB FAD monooxygenase family. It depends on FAD as a cofactor.

It catalyses the reaction 3-(3-hydroxyphenyl)propanoate + NADH + O2 + H(+) = 3-(2,3-dihydroxyphenyl)propanoate + NAD(+) + H2O. The enzyme catalyses (2E)-3-(3-hydroxyphenyl)prop-2-enoate + NADH + O2 + H(+) = (2E)-3-(2,3-dihydroxyphenyl)prop-2-enoate + NAD(+) + H2O. The protein operates within aromatic compound metabolism; 3-phenylpropanoate degradation. In terms of biological role, catalyzes the insertion of one atom of molecular oxygen into position 2 of the phenyl ring of 3-(3-hydroxyphenyl)propionate (3-HPP) and hydroxycinnamic acid (3HCI). The protein is 3-(3-hydroxy-phenyl)propionate/3-hydroxycinnamic acid hydroxylase 2 of Burkholderia vietnamiensis (strain G4 / LMG 22486) (Burkholderia cepacia (strain R1808)).